The following is a 564-amino-acid chain: Dihydroxy-acid dehydratase (564 aa).

Asp-80 is a Mg(2+) binding site. Position 121 (Cys-121) interacts with [2Fe-2S] cluster. 2 residues coordinate Mg(2+): Asp-122 and Lys-123. Residue Lys-123 is modified to N6-carboxylysine. Cys-194 provides a ligand contact to [2Fe-2S] cluster. Glu-447 provides a ligand contact to Mg(2+). The active-site Proton acceptor is the Ser-473.

It belongs to the IlvD/Edd family. Homodimer. [2Fe-2S] cluster is required as a cofactor. The cofactor is Mg(2+).

It catalyses the reaction (2R)-2,3-dihydroxy-3-methylbutanoate = 3-methyl-2-oxobutanoate + H2O. The enzyme catalyses (2R,3R)-2,3-dihydroxy-3-methylpentanoate = (S)-3-methyl-2-oxopentanoate + H2O. It participates in amino-acid biosynthesis; L-isoleucine biosynthesis; L-isoleucine from 2-oxobutanoate: step 3/4. It functions in the pathway amino-acid biosynthesis; L-valine biosynthesis; L-valine from pyruvate: step 3/4. Functionally, functions in the biosynthesis of branched-chain amino acids. Catalyzes the dehydration of (2R,3R)-2,3-dihydroxy-3-methylpentanoate (2,3-dihydroxy-3-methylvalerate) into 2-oxo-3-methylpentanoate (2-oxo-3-methylvalerate) and of (2R)-2,3-dihydroxy-3-methylbutanoate (2,3-dihydroxyisovalerate) into 2-oxo-3-methylbutanoate (2-oxoisovalerate), the penultimate precursor to L-isoleucine and L-valine, respectively. The polypeptide is Dihydroxy-acid dehydratase (Listeria monocytogenes serotype 4a (strain HCC23)).